The chain runs to 366 residues: Protein-methionine-sulfoxide reductase catalytic subunit MsrP (366 aa).

Residues 1 to 22 (MHNTFTHTKNNTHTKNNTQAKN) are compositionally biased toward low complexity. The interval 1 to 40 (MHNTFTHTKNNTHTKNNTQAKNSGSQTKSNAVSLNKPRKL) is disordered. Positions 1 to 76 (MHNTFTHTKN…TLALPASAQA (76 aa)) form a signal peptide, tat-type signal. Over residues 23-33 (SGSQTKSNAVS) the composition is skewed to polar residues. Mo-molybdopterin is bound by residues Asn120, 123–124 (YE), Cys178, Thr213, Asn265, Arg270, and 281–283 (SIK).

This sequence belongs to the MsrP family. Heterodimer of a catalytic subunit (MsrP) and a heme-binding subunit (MsrQ). It depends on Mo-molybdopterin as a cofactor. Post-translationally, predicted to be exported by the Tat system. The position of the signal peptide cleavage has not been experimentally proven.

The protein localises to the periplasm. The enzyme catalyses L-methionyl-[protein] + a quinone + H2O = L-methionyl-(S)-S-oxide-[protein] + a quinol. It catalyses the reaction L-methionyl-[protein] + a quinone + H2O = L-methionyl-(R)-S-oxide-[protein] + a quinol. Functionally, part of the MsrPQ system that repairs oxidized periplasmic proteins containing methionine sulfoxide residues (Met-O), using respiratory chain electrons. Thus protects these proteins from oxidative-stress damage caused by reactive species of oxygen and chlorine generated by the host defense mechanisms. MsrPQ is essential for the maintenance of envelope integrity under bleach stress, rescuing a wide series of structurally unrelated periplasmic proteins from methionine oxidation. The catalytic subunit MsrP is non-stereospecific, being able to reduce both (R-) and (S-) diastereoisomers of methionine sulfoxide. The sequence is that of Protein-methionine-sulfoxide reductase catalytic subunit MsrP from Yersinia pestis.